Reading from the N-terminus, the 158-residue chain is MKLVAVTSCPTGIAHSQMAAENLLQAGERLGHDIDVEVQGAMGTQDELASDAIAEADAVIITSDTSVSRDRFDGKLVLKGTVKDGVNNAEAVVQKAVELAEAGKTGSVTFGSGDDGEDADVGADDSSDDADAAESDEPVRRGGDPEKGLFARLKKLFS.

Residues 1–98 form the PTS EIIB type-2 domain; the sequence is MKLVAVTSCP…AEAVVQKAVE (98 aa). Cysteine 9 acts as the Phosphocysteine intermediate in catalysis. Residue cysteine 9 is modified to Phosphocysteine; by EIIA. The tract at residues 104–147 is disordered; sequence KTGSVTFGSGDDGEDADVGADDSSDDADAAESDEPVRRGGDPEK. A compositionally biased stretch (acidic residues) spans 114–136; that stretch reads DDGEDADVGADDSSDDADAAESD. Positions 137-147 are enriched in basic and acidic residues; sequence EPVRRGGDPEK.

It localises to the cytoplasm. The catalysed reaction is D-fructose(out) + N(pros)-phospho-L-histidyl-[protein] = D-fructose 1-phosphate(in) + L-histidyl-[protein]. Its function is as follows. The phosphoenolpyruvate-dependent sugar phosphotransferase system (sugar PTS), a major carbohydrate active transport system, catalyzes the phosphorylation of incoming sugar substrates concomitantly with their translocation across the cell membrane. The enzyme II PtfABC PTS system is involved in fructose transport. In Haloferax volcanii (strain ATCC 29605 / DSM 3757 / JCM 8879 / NBRC 14742 / NCIMB 2012 / VKM B-1768 / DS2) (Halobacterium volcanii), this protein is PTS system fructose-specific EIIB component.